The chain runs to 330 residues: ATP-dependent (S)-NAD(P)H-hydrate dehydratase (330 aa).

The region spanning 36–327 (VIPLVRNTIP…QEINSAFKKL (292 aa)) is the YjeF C-terminal domain. (6S)-NADPHX-binding positions include glycine 136 and 189–195 (NFMEFTR). ATP-binding positions include 229–233 (KGEED) and 248–257 (GSGRRCGGQG). Residue aspartate 258 coordinates (6S)-NADPHX.

This sequence belongs to the NnrD/CARKD family. Mg(2+) serves as cofactor.

It catalyses the reaction (6S)-NADHX + ATP = ADP + phosphate + NADH + H(+). The enzyme catalyses (6S)-NADPHX + ATP = ADP + phosphate + NADPH + H(+). Functionally, catalyzes the dehydration of the S-form of NAD(P)HX at the expense of ATP, which is converted to ADP. Together with NAD(P)HX epimerase, which catalyzes the epimerization of the S- and R-forms, the enzyme allows the repair of both epimers of NAD(P)HX, a damaged form of NAD(P)H that is a result of enzymatic or heat-dependent hydration. The chain is ATP-dependent (S)-NAD(P)H-hydrate dehydratase from Danio rerio (Zebrafish).